Consider the following 420-residue polypeptide: Phosphoribosylamine--glycine ligase (420 aa).

One can recognise an ATP-grasp domain in the interval 108-314; sequence KQFMEKYAIP…FAALIDALLH (207 aa). Residue 134-195 coordinates ATP; it reads LDERGVPIVI…EDFLAGEEFS (62 aa). The Mg(2+) site is built by glutamate 284 and asparagine 286.

The protein belongs to the GARS family. It depends on Mg(2+) as a cofactor. Requires Mn(2+) as cofactor.

The catalysed reaction is 5-phospho-beta-D-ribosylamine + glycine + ATP = N(1)-(5-phospho-beta-D-ribosyl)glycinamide + ADP + phosphate + H(+). The protein operates within purine metabolism; IMP biosynthesis via de novo pathway; N(1)-(5-phospho-D-ribosyl)glycinamide from 5-phospho-alpha-D-ribose 1-diphosphate: step 2/2. The polypeptide is Phosphoribosylamine--glycine ligase (Listeria monocytogenes serotype 4b (strain F2365)).